A 578-amino-acid chain; its full sequence is Hemolysin 4 (578 aa).

Residues 289–322 form a disordered region; it reads KDGPKASWRRRPSSASSVTMPTTPRIIGSNARPE. The 92-residue stretch at 448-539 folds into the Ricin B-type lectin domain; it reads RPVNLQLGGF…LSNLSAHQLL (92 aa).

It belongs to the HlyA hemolysin family.

Its function is as follows. Bacterial hemolysins are exotoxins that attack blood cell membranes and cause cell rupture by mechanisms not clearly defined. The protein is Hemolysin 4 (ash4) of Aeromonas salmonicida.